A 202-amino-acid polypeptide reads, in one-letter code: Transmembrane 4 L6 family member 4 (202 aa).

Residues 1–9 (MCTGGCARC) lie on the Cytoplasmic side of the membrane. A helical membrane pass occupies residues 10–30 (LGGTLIPLAVFAVLANILLFF). Residues 31-48 (PGGKVVDDNSHLSDEVWY) lie on the Extracellular side of the membrane. Residues 49–69 (FGGILGSGVLMIFPALVFLGL) traverse the membrane as a helical segment. Over 70 to 93 (QNNDCCGCCGNESCGKRFAMFTST) the chain is Cytoplasmic. The chain crosses the membrane as a helical span at residues 94–114 (LFAVVGFLGAAYSFIVSAVSI). The Extracellular segment spans residues 115–158 (NKGPKCFMTNNTWGYPFHDGDYLNDQALWSKCEEPRDVVPWNLT). Asparagine 156 carries an N-linked (GlcNAc...) asparagine glycan. Residues 159–179 (LFSILLVIGGIQMVLCAIQVI) traverse the membrane as a helical segment. Residues 180-202 (NGLLGTLCGDCQCCGCCGGDRPV) lie on the Cytoplasmic side of the membrane.

Belongs to the L6 tetraspanin family. Expressed in liver and testis. Up-regulated in regenerating liver after partial hepatectomy.

It is found in the membrane. In terms of biological role, regulates the adhesive and proliferative status of intestinal epithelial cells. Can mediate density-dependent cell proliferation. This chain is Transmembrane 4 L6 family member 4 (Tm4sf4), found in Rattus norvegicus (Rat).